A 521-amino-acid chain; its full sequence is Cell adhesion molecule CEACAM1 (521 aa).

Residues 1–34 (MELASAHLHKGQVPWGGLLLTASLLASWSPATTA) form the signal peptide. In terms of domain architecture, Ig-like V-type spans 35 to 142 (EVTIEAVPPQ…QATVRFHVHP (108 aa)). The Extracellular segment spans residues 35 to 428 (EVTIEAVPPQ…GGLSDGAIAG (394 aa)). Positions 39 to 142 (EAVPPQVAED…QATVRFHVHP (104 aa)) are required for homophilic binding. N-linked (GlcNAc...) asparagine glycans are attached at residues Asn71, Asn89, Asn104, Asn148, Asn152, Asn199, Asn206, Asn210, Asn226, Asn258, Asn290, Asn294, Asn304, Asn317, Asn333, and Asn375. Ig-like C2-type domains follow at residues 147 to 234 (PNIT…FSLN), 239 to 319 (PDTP…KNIT), and 323 to 411 (PVTQ…IKLD). A disulfide bond links Cys167 and Cys217. Cys261 and Cys301 form a disulfide bridge. A disulfide bond links Cys346 and Cys394. Residues 429–447 (IVIGVVAGVALIAGLAYFL) traverse the membrane as a helical segment. Residues 445–457 (YFLYSRKSGGGSD) form an interaction with calmodulin region. The segment at 447-521 (LYSRKSGGGS…ETVYSEVKKK (75 aa)) is interaction with FLNA. Topologically, residues 448 to 521 (YSRKSGGGSD…ETVYSEVKKK (74 aa)) are cytoplasmic. The segment at 455-521 (GSDQRDLTEH…ETVYSEVKKK (67 aa)) is disordered. Residues 457-466 (DQRDLTEHKP) are compositionally biased toward basic and acidic residues. Positions 467–481 (STSNHNLAPSDNSPN) are enriched in polar residues. Residues 484 to 521 (DDVAYTVLNFNSQQPNRPTSAPSSPRATETVYSEVKKK) are required for interaction with PTPN11 and PTPN6 and for control of phosphorylation level. Tyr488 carries the phosphotyrosine; by SRC, LCK, INSR and EGFR modification. Polar residues predominate over residues 491–514 (LNFNSQQPNRPTSAPSSPRATETV). Residue Ser503 is modified to Phosphoserine. Tyr515 carries the post-translational modification Phosphotyrosine; by INSR, SRC and LCK. The tract at residues 515–518 (YSEV) is essential for interaction with PTPN11 and PTPN6.

Belongs to the immunoglobulin superfamily. CEA family. (Microbial infection) Interacts with MHV S1 spike glycoprotein. In terms of assembly, monomer. Oligomer. Heterodimer. Homodimer. Cis-dimer/oligomer (via Ig-like C2-type and/or via cytoplasmic domains); induced by trans-homophilic cell adhesion through an allosteric mechanism transmitted by the Ig-like V-type domain, and is regulated by intracellular calcium and calmodulin. Interacts (via cytoplasmic domain) with calmodulin in a calcium dependent manner; reduces homophilic cell adhesion through dissociation of dimer. Isoform 1 interacts (via cytoplasmic domain) with PTPN11 (preferentially) and PTPN6; cis-homodimer form is preferred; this interaction is decreased by formation of isoform 1 / isoform 2 cis-heterodimers and is dependent on the monomer/dimer equilibrium; this interaction is phosphorylation-dependent. Isoform 1 interacts with LYN. Isoform 1 interacts (via cytoplasmic domain) with SRC (via SH2 domain); this interaction is regulated by trans-homophilic cell adhesion. Isoform 1 interacts with LCK; mediates phosphorylation at Tyr-488 and Tyr-515 resulting in PTPN6 association. Isoform 1 interacts with PTPN6; this interaction is phosphorylation-dependent and causes a profound decrease in TCR stimulation-induced CD247 and ZAP70 phosphorylation. Isoform 1 interacts with TCR/CD3 complex through TCR beta chain and CD3E; colocalizes at the cell surface and upon stimulation of the TCR/CD3 complex recruits PTPN6 in the TCR/CD3 complex, resulting in dephosphorylation of CD247 and ZAP70. Isoform 1 interacts (via cytoplasmic domain) with SHC1 (via SH2 domain); SHC1 mediates interaction with INSR or EGFR in a Ser-503 phosphorylation-dependent manner. Isoform 1 interacts with EGFR; the interaction is indirect. Isoform 1 interacts with CSF3R; down-regulates the CSF3R-STAT3 pathway through recruitment of PTPN6 that dephosphorylates CSF3R. Isoform 1 (phosphorylated form) interacts with TLR4 and SYK; recruits PTPN6 that dephosphorylates SYK, reducing the production of reactive oxygen species (ROS) and lysosome disruption, leading to a reduction of the inflammasome activity. Isoform 1 interacts with FLNA; inhibits cell migration and cell scattering by interfering with the interaction of FLNA with RALA. Isoform 1 interacts (via cytoplasmic domain) with PXN; the interaction is phosphotyrosyl-dependent. Isoform 1 interacts with KLRK1; recruits PTPN6 that dephosphorylates VAV1. Isoform 1 interacts with CEACAM8. Isoform 1 interacts with FASN; this interaction is insulin and phosphorylation-dependent; reduces fatty-acid synthase activity. Interacts (via Ig-like V-type) with HAVCR2 (via Ig-like V-type); facilitates the maturation and cell surface expression of HAVCR2 thereby regulating T-cell tolerance induction. Isoform 2 interacts (via the cytoplasmic domain) with ANXA2; this interaction is regulated by phosphorylation and appears in the AIIt complex. Interacts (via Lewis X moieties) with CD209 (via C-type lectin domain); this interaction is regulated by the glycosylation pattern of CEACAM1 on cell types and regulates contact between dendritic cells and neutrophils. Post-translationally, phosphorylated on serine and tyrosine. Isoform 1 is phosphorylated on tyrosine by Src family kinases like SRC and LCK and by receptor like CSF3R, EGFR and INSR upon stimulation. Phosphorylated at Ser-503; mediates activity. Phosphorylated at Tyr-488; regulates activity. Phosphorylated at Tyr-488 by EGFR and INSR upon stimulation; this phosphorylation is Ser-503-phosphorylation-dependent; mediates cellular internalization; increases interaction with FASN. Phosphorylated at Tyr-488 and Tyr-515 by LCK; mediates PTPN6 association and is regulated by homophilic ligation of CEACAM1 in the absence of T-cell activation. Phosphorylated at Tyr-515; mediates interaction with PTPN11. Phosphorylated on serine and threonine. As to expression, expressed in granulocytes, lymphocytes, granulocytes, B cells, and T-cells. Expressed in bone. Highly expressed in liver and femur. Highly expressed in neutrophils, and to a lesser extent inmonocytes, and macrophages. Slightly higher expressed in peripheral blood neutrophils (PBNs). Intestinal T-cells predominantly express isoform 2 while extraintestinal T-cells mainly express isoform 1. Expressed in small intestine and colon.

The protein resides in the cell membrane. Its subcellular location is the lateral cell membrane. The protein localises to the apical cell membrane. It is found in the basal cell membrane. It localises to the cell junction. The protein resides in the adherens junction. Its subcellular location is the cytoplasmic vesicle. The protein localises to the secretory vesicle. It is found in the cell projection. It localises to the microvillus membrane. Cell adhesion protein that mediates homophilic cell adhesion in a calcium-independent manner. Plays a role as coinhibitory receptor in immune response, insulin action and also functions as an activator during angiogenesis. Its coinhibitory receptor function is phosphorylation- and PTPN6 -dependent, which in turn, suppress signal transduction of associated receptors by dephosphorylation of their downstream effectors. Plays a role in immune response, of T-cells, natural killer (NK) and neutrophils. Upon TCR/CD3 complex stimulation, inhibits TCR-mediated cytotoxicity by blocking granule exocytosis by mediating homophilic binding to adjacent cells, allowing interaction with and phosphorylation by LCK and interaction with the TCR/CD3 complex which recruits PTPN6 resulting in dephosphorylation of CD247 and ZAP70. Also inhibits T-cell proliferation and cytokine production through inhibition of JNK cascade and plays a crucial role in regulating autoimmunity and anti-tumor immunity by inhibiting T-cell through its interaction with HAVCR2. Upon natural killer (NK) cells activation, inhibit KLRK1-mediated cytolysis of CEACAM1-bearing tumor cells by trans-homophilic interactions with CEACAM1 on the target cell and lead to cis-interaction between CEACAM1 and KLRK1, allowing PTPN6 recruitment and then VAV1 dephosphorylation. Upon neutrophils activation negatively regulates IL1B production by recruiting PTPN6 to a SYK-TLR4-CEACAM1 complex, that dephosphorylates SYK, reducing the production of reactive oxygen species (ROS) and lysosome disruption, which in turn, reduces the activity of the inflammasome. Down-regulates neutrophil production by acting as a coinhibitory receptor for CSF3R by downregulating the CSF3R-STAT3 pathway through recruitment of PTPN6 that dephosphorylates CSF3R. Also regulates insulin action by promoting INS clearance and regulating lipogenesis in liver through regulating insulin signaling. Upon INS stimulation, undergoes phosphorylation by INSR leading to INS clearance by increasing receptor-mediated insulin endocytosis. This inernalization promotes interaction with FASN leading to receptor-mediated insulin degradation and to reduction of FASN activity leading to negative regulation of fatty acid synthesis. INSR-mediated phosphorylation also provokes a down-regulation of cell proliferation through SHC1 interaction resulting in decrease coupling of SHC1 to the MAPK3/ERK1-MAPK1/ERK2 and phosphatidylinositol 3-kinase pathways. Functions as activator in angiogenesis by promoting blood vessel remodeling through endothelial cell differentiation and migration and in arteriogenesis by increasing the number of collateral arteries and collateral vessel calibers after ischemia. Also regulates vascular permeability through the VEGFR2 signaling pathway resulting in control of nitric oxide production. Down-regulates cell growth in response to EGF through its interaction with SHC1 that mediates interaction with EGFR resulting in decrease coupling of SHC1 to the MAPK3/ERK1-MAPK1/ERK2 pathway. Negatively regulates platelet aggregation by decreasing platelet adhesion on type I collagen through the GPVI-FcRgamma complex. Inhibits cell migration and cell scattering through interaction with FLNA; interferes with the interaction of FLNA with RALA. Mediates bile acid transport activity in a phosphorylation dependent manner. Negatively regulates osteoclastogenesis. In terms of biological role, cell adhesion protein that mediates homophilic cell adhesion in a calcium-independent manner. Promotes populations of T-cells regulating IgA production and secretion associated with control of the commensal microbiota and resistance to enteropathogens. Functionally, (Microbial infection) In case of murine coronavirus (MHV) infection, serves as receptor for MHV S1 spike glycoprotein. The polypeptide is Cell adhesion molecule CEACAM1 (Mus musculus (Mouse)).